A 193-amino-acid chain; its full sequence is dTTP/UTP pyrophosphatase (193 aa).

The active-site Proton acceptor is D75.

This sequence belongs to the Maf family. YhdE subfamily. The cofactor is a divalent metal cation.

It localises to the cytoplasm. The enzyme catalyses dTTP + H2O = dTMP + diphosphate + H(+). It catalyses the reaction UTP + H2O = UMP + diphosphate + H(+). In terms of biological role, nucleoside triphosphate pyrophosphatase that hydrolyzes dTTP and UTP. May have a dual role in cell division arrest and in preventing the incorporation of modified nucleotides into cellular nucleic acids. This is dTTP/UTP pyrophosphatase from Chlorobium phaeovibrioides (strain DSM 265 / 1930) (Prosthecochloris vibrioformis (strain DSM 265)).